We begin with the raw amino-acid sequence, 112 residues long: uncharacterized protein (112 aa).

The transit peptide at Met-1–Leu-21 directs the protein to the mitochondrion.

It localises to the mitochondrion. This is an uncharacterized protein from Saccharomyces cerevisiae (strain ATCC 204508 / S288c) (Baker's yeast).